A 64-amino-acid chain; its full sequence is DNA-directed RNA polymerase subunit omega (64 aa).

Belongs to the RNA polymerase subunit omega family. The RNAP catalytic core consists of 2 alpha, 1 beta, 1 beta' and 1 omega subunit. When a sigma factor is associated with the core the holoenzyme is formed, which can initiate transcription.

The catalysed reaction is RNA(n) + a ribonucleoside 5'-triphosphate = RNA(n+1) + diphosphate. In terms of biological role, promotes RNA polymerase assembly. Latches the N- and C-terminal regions of the beta' subunit thereby facilitating its interaction with the beta and alpha subunits. In Oceanobacillus iheyensis (strain DSM 14371 / CIP 107618 / JCM 11309 / KCTC 3954 / HTE831), this protein is DNA-directed RNA polymerase subunit omega.